The chain runs to 824 residues: Fibroblast growth factor receptor 2 (824 aa).

The signal sequence occupies residues 1–21 (MFSWSYLMGLVMVATATLSLA). Residues 22-374 (RPSYNIAEDT…LDSSSSEYTE (353 aa)) are Extracellular-facing. The region spanning 25–125 (YNIAEDTTLE…ETRYFIVNIT (101 aa)) is the Ig-like C2-type 1 domain. Cysteine 62 and cysteine 107 are disulfide-bonded. Asparagine 83, asparagine 123, and asparagine 128 each carry an N-linked (GlcNAc...) asparagine glycan. The segment at 125 to 152 (TDGNSSGDDEDDNDGSEDFTNDNNHKRA) is disordered. Positions 131 to 144 (GDDEDDNDGSEDFT) are enriched in acidic residues. Ig-like C2-type domains lie at 153-246 (PYWT…YHLD) and 254-356 (PPIL…AWLT). A heparin-binding region spans residues 160-177 (KLEKKLHAVPAANTVKFR). Residues cysteine 178 and cysteine 230 are joined by a disulfide bond. N-linked (GlcNAc...) asparagine glycans are attached at residues asparagine 227, asparagine 240, asparagine 264, asparagine 295, asparagine 316, and asparagine 329. Residues cysteine 277 and cysteine 340 are joined by a disulfide bond. A helical transmembrane segment spans residues 375-395 (IAIYCVGGFLIACMIGTIMMC). Over 396–824 (HMKGRGKKSD…PLKHEATQPA (429 aa)) the chain is Cytoplasmic. Tyrosine 463 carries the post-translational modification Phosphotyrosine; by autocatalysis. Positions 478-767 (LTLGKPLGEG…LTQTTNEEYL (290 aa)) constitute a Protein kinase domain. ATP is bound by residues 484–492 (LGEGCFGQV), lysine 514, 562–564 (EYA), and asparagine 568. Residue tyrosine 583 is modified to Phosphotyrosine; by autocatalysis. Aspartate 623 (proton acceptor) is an active-site residue. Tyrosine 653, tyrosine 654, and tyrosine 766 each carry phosphotyrosine; by autocatalysis. Positions 801 to 824 (SMNLAFPNPNTQMAPLKHEATQPA) are disordered.

This sequence belongs to the protein kinase superfamily. Tyr protein kinase family. Fibroblast growth factor receptor subfamily. Monomer. Homodimer after ligand binding. Post-translationally, autophosphorylated. Binding of FGF family members together with heparan sulfate proteoglycan or heparin promotes receptor dimerization and autophosphorylation on tyrosine residues. Autophosphorylation occurs in trans between the two FGFR molecules present in the dimer. N-glycosylated in the endoplasmic reticulum. The N-glycan chains undergo further maturation to an Endo H-resistant form in the Golgi apparatus. In terms of processing, ubiquitinated. FGFR2 is rapidly ubiquitinated after autophosphorylation, leading to internalization and degradation. Subject to degradation both in lysosomes and by the proteasome.

The protein localises to the cell membrane. Its subcellular location is the golgi apparatus. It is found in the cytoplasmic vesicle. It catalyses the reaction L-tyrosyl-[protein] + ATP = O-phospho-L-tyrosyl-[protein] + ADP + H(+). Its activity is regulated as follows. Present in an inactive conformation in the absence of bound ligand. Ligand binding leads to dimerization and activation by autophosphorylation on tyrosine residues. Tyrosine-protein kinase that acts as a cell-surface receptor for fibroblast growth factors and plays an essential role in the regulation of cell proliferation, differentiation, migration and apoptosis, and in the regulation of embryonic development. Required for normal embryonic patterning, limb bud development, lung morphogenesis, osteogenesis and skin development. Plays an essential role in the regulation of osteoblast differentiation, proliferation and apoptosis, and is required for normal skeleton development. Promotes cell proliferation in keratinocytes and immature osteoblasts, but promotes apoptosis in differentiated osteoblasts. Phosphorylates PLCG1, FRS2 and PAK4. Ligand binding leads to the activation of several signaling cascades. Activation of PLCG1 leads to the production of the cellular signaling molecules diacylglycerol and inositol 1,4,5-trisphosphate. Phosphorylation of FRS2 triggers recruitment of GRB2, GAB1, PIK3R1 and SOS1, and mediates activation of RAS, MAPK1/ERK2, MAPK3/ERK1 and the MAP kinase signaling pathway, as well as of the AKT1 signaling pathway. FGFR2 signaling is down-regulated by ubiquitination, internalization and degradation. Mutations that lead to constitutive kinase activation or impair normal FGFR2 maturation, internalization and degradation lead to aberrant signaling. Over-expressed FGFR2 promotes activation of STAT1. This is Fibroblast growth factor receptor 2 (FGFR2) from Pleurodeles waltl (Iberian ribbed newt).